Consider the following 777-residue polypeptide: DnaJ homolog subfamily C member 16 (777 aa).

The N-terminal stretch at 1-23 is a signal peptide; the sequence is MELGRAGPAGLLLLLLLLLAAQA. Over 24–531 the chain is Cytoplasmic; it reads APERDPYRVL…DSLFHSNWRE (508 aa). In terms of domain architecture, J spans 28 to 92; it reads DPYRVLGVGR…EKRANFDRYG (65 aa). Positions 117–243 constitute a Thioredoxin domain; sequence FDESFFHFPF…LRQFVENLLP (127 aa). Residues 532–552 traverse the membrane as a helical; Anchor for type IV membrane protein segment; the sequence is MMPLLSLLFSALFILFGTVIV. Residues 553–777 are Extracellular-facing; that stretch reads QAFSDSSDTR…FYIPSWPALD (225 aa). The disordered stretch occupies residues 558–589; that stretch reads SSDTRDSPASEKKDTTAKTEKNDTSFNKESNS. The span at 559 to 580 shows a compositional bias: basic and acidic residues; the sequence is SDTRDSPASEKKDTTAKTEKND. Asparagine 627 is a glycosylation site (N-linked (GlcNAc...) asparagine).

It is found in the endoplasmic reticulum membrane. In terms of biological role, plays an important role in regulating the size of autophagosomes during the formation process. The protein is DnaJ homolog subfamily C member 16 (DNAJC16) of Gallus gallus (Chicken).